We begin with the raw amino-acid sequence, 317 residues long: Homoserine O-succinyltransferase (317 aa).

The active-site Acyl-thioester intermediate is the Cys142. Positions 163 and 192 each coordinate substrate. Catalysis depends on His235, which acts as the Proton acceptor. Residue Glu237 is part of the active site. Arg249 is a substrate binding site.

Belongs to the MetA family.

The protein resides in the cytoplasm. The catalysed reaction is L-homoserine + succinyl-CoA = O-succinyl-L-homoserine + CoA. The protein operates within amino-acid biosynthesis; L-methionine biosynthesis via de novo pathway; O-succinyl-L-homoserine from L-homoserine: step 1/1. Its function is as follows. Transfers a succinyl group from succinyl-CoA to L-homoserine, forming succinyl-L-homoserine. This Aeromonas hydrophila subsp. hydrophila (strain ATCC 7966 / DSM 30187 / BCRC 13018 / CCUG 14551 / JCM 1027 / KCTC 2358 / NCIMB 9240 / NCTC 8049) protein is Homoserine O-succinyltransferase.